A 157-amino-acid chain; its full sequence is Cyclic pyranopterin monophosphate synthase (157 aa).

Residues 75–77 (LCH) and 111–112 (ME) contribute to the substrate site. The active site involves Asp126.

Belongs to the MoaC family. As to quaternary structure, homohexamer; trimer of dimers.

It catalyses the reaction (8S)-3',8-cyclo-7,8-dihydroguanosine 5'-triphosphate = cyclic pyranopterin phosphate + diphosphate. It functions in the pathway cofactor biosynthesis; molybdopterin biosynthesis. Its function is as follows. Catalyzes the conversion of (8S)-3',8-cyclo-7,8-dihydroguanosine 5'-triphosphate to cyclic pyranopterin monophosphate (cPMP). This is Cyclic pyranopterin monophosphate synthase from Novosphingobium aromaticivorans (strain ATCC 700278 / DSM 12444 / CCUG 56034 / CIP 105152 / NBRC 16084 / F199).